Reading from the N-terminus, the 84-residue chain is Small ribosomal subunit protein eS27-like (84 aa).

Over residues 1–16 (MPLARDLLHPSLEEEK) the composition is skewed to basic and acidic residues. The segment at 1 to 23 (MPLARDLLHPSLEEEKKKHKKKR) is disordered. The C4-type zinc-finger motif lies at 38-60 (PGCYKITTVFSHAQTVVLCVGCS).

Belongs to the eukaryotic ribosomal protein eS27 family. It depends on Zn(2+) as a cofactor.

The protein is Small ribosomal subunit protein eS27-like of Mus musculus (Mouse).